The sequence spans 283 residues: Pantothenate synthetase (283 aa).

Position 30–37 (30–37) interacts with ATP; it reads MGNLHAGH. H37 serves as the catalytic Proton donor. Q61 provides a ligand contact to (R)-pantoate. Q61 is a binding site for beta-alanine. ATP is bound at residue 149–152; it reads GRKD. Q155 lines the (R)-pantoate pocket. ATP is bound at residue 186-189; it reads LSSR.

Belongs to the pantothenate synthetase family. As to quaternary structure, homodimer.

Its subcellular location is the cytoplasm. It carries out the reaction (R)-pantoate + beta-alanine + ATP = (R)-pantothenate + AMP + diphosphate + H(+). The protein operates within cofactor biosynthesis; (R)-pantothenate biosynthesis; (R)-pantothenate from (R)-pantoate and beta-alanine: step 1/1. Functionally, catalyzes the condensation of pantoate with beta-alanine in an ATP-dependent reaction via a pantoyl-adenylate intermediate. The protein is Pantothenate synthetase of Chromohalobacter salexigens (strain ATCC BAA-138 / DSM 3043 / CIP 106854 / NCIMB 13768 / 1H11).